We begin with the raw amino-acid sequence, 248 residues long: Ubiquinone/menaquinone biosynthesis C-methyltransferase UbiE (248 aa).

2 residues coordinate S-adenosyl-L-methionine: S68 and D92.

It belongs to the class I-like SAM-binding methyltransferase superfamily. MenG/UbiE family.

The enzyme catalyses a 2-demethylmenaquinol + S-adenosyl-L-methionine = a menaquinol + S-adenosyl-L-homocysteine + H(+). It carries out the reaction a 2-methoxy-6-(all-trans-polyprenyl)benzene-1,4-diol + S-adenosyl-L-methionine = a 5-methoxy-2-methyl-3-(all-trans-polyprenyl)benzene-1,4-diol + S-adenosyl-L-homocysteine + H(+). The protein operates within quinol/quinone metabolism; menaquinone biosynthesis; menaquinol from 1,4-dihydroxy-2-naphthoate: step 2/2. It participates in cofactor biosynthesis; ubiquinone biosynthesis. Its function is as follows. Methyltransferase required for the conversion of demethylmenaquinol (DMKH2) to menaquinol (MKH2) and the conversion of 2-polyprenyl-6-methoxy-1,4-benzoquinol (DDMQH2) to 2-polyprenyl-3-methyl-6-methoxy-1,4-benzoquinol (DMQH2). This Rickettsia conorii (strain ATCC VR-613 / Malish 7) protein is Ubiquinone/menaquinone biosynthesis C-methyltransferase UbiE.